The sequence spans 402 residues: Protein HAIKU1 (402 aa).

Disordered regions lie at residues 1–44 (MDRP…LQTQ), 63–135 (TGSP…QQPM), 160–266 (SSLG…LVPS), and 346–402 (QPLT…WNDY). The segment covering 24-44 (LHQSTFAASTSNGAAPRLQTQ) has biased composition (polar residues). The short motif at 55 to 64 (FRSIVQQLTG) is the VQ element. Polar residues predominate over residues 76–87 (QNNSLRPQNTRL). The span at 103 to 113 (VPLPSMAPPQS) shows a compositional bias: pro residues. A compositionally biased stretch (polar residues) spans 160–173 (SSLGDSGPNANQMQ). Positions 218-240 (MPAQSQSQSQPQPQPQPQQHMMP) are enriched in low complexity. A compositionally biased stretch (pro residues) spans 257-266 (YLPPPGLVPS). A compositionally biased stretch (polar residues) spans 349 to 358 (TPNFSFSQIA). Pro residues predominate over residues 371 to 380 (QGPPQPPPSP). Residues 381–390 (GLMFPLSPSG) are compositionally biased toward low complexity.

As to quaternary structure, interacts with WRKY10. Interacts with MPK6.

It is found in the nucleus. Its function is as follows. Modulates seed size by negatively regulating the cellularization of syncytial endosperm. May function by binding and modulating the activity of WRKY10 transcription factor. The chain is Protein HAIKU1 from Arabidopsis thaliana (Mouse-ear cress).